Reading from the N-terminus, the 305-residue chain is Translation initiation factor eIF2B subunit alpha (305 aa).

The protein belongs to the eIF-2B alpha/beta/delta subunits family. Component of the translation initiation factor 2B (eIF2B) complex which is a heterodecamer of two sets of five different subunits: alpha, beta, gamma, delta and epsilon. Subunits alpha, beta and delta comprise a regulatory subcomplex and subunits epsilon and gamma comprise a catalytic subcomplex. Within the complex, the hexameric regulatory complex resides at the center, with the two heterodimeric catalytic subcomplexes bound on opposite sides.

It localises to the cytoplasm. Its subcellular location is the cytosol. Acts as a component of the translation initiation factor 2B (eIF2B) complex, which catalyzes the exchange of GDP for GTP on eukaryotic initiation factor 2 (eIF2) gamma subunit. Its guanine nucleotide exchange factor activity is repressed when bound to eIF2 complex phosphorylated on the alpha subunit, thereby limiting the amount of methionyl-initiator methionine tRNA available to the ribosome and consequently global translation is repressed. The polypeptide is Translation initiation factor eIF2B subunit alpha (Caenorhabditis elegans).